We begin with the raw amino-acid sequence, 808 residues long: DNA replication licensing factor MCM3 (808 aa).

An N-acetylalanine modification is found at Ala2. Phosphoserine occurs at positions 160 and 275. At Lys293 the chain carries N6-acetyllysine. Positions 295 to 502 (IFDQLARSLA…QDREISDHVL (208 aa)) constitute an MCM domain. 5 residues coordinate ADP: Gln353, Leu393, Glu394, Ala395, and Ala397. Residues 477 to 480 (SRFD) carry the Arginine finger motif. Ala523 contributes to the ATP binding site. Ser535 is subject to Phosphoserine; by ATM. Residue Lys547 is modified to N6-acetyllysine. Ser611 is modified (phosphoserine). The segment at 662-739 (KKRKKRSEDE…ETKESQKVEL (78 aa)) is disordered. ATP is bound at residue Arg664. Ser668, Ser672, and Ser681 each carry phosphoserine. The segment covering 679–688 (EKSQEDQEQK) has biased composition (basic and acidic residues). Position 708 is a phosphotyrosine (Tyr708). A phosphothreonine mark is found at Thr713 and Thr722. Positions 727–739 (DSQETKESQKVEL) are enriched in basic and acidic residues. 2 positions are modified to phosphoserine: Ser728 and Ser734.

Belongs to the MCM family. As to quaternary structure, component of the MCM2-7 complex. The complex forms a toroidal hexameric ring with the proposed subunit order MCM2-MCM6-MCM4-MCM7-MCM3-MCM5. Component of the CMG helicase complex, a hexameric ring of related MCM2-7 subunits stabilized by CDC45 and the tetrameric GINS complex. Associated with the replication-specific DNA polymerase alpha. Interacts with MCMBP. Interacts with ANKRD17. Interacts with MCM3AP isoform MCM3AP; this interaction leads to MCM3 acetylation. In terms of processing, acetylated by MCM3AP. Post-translationally, O-glycosylated (O-GlcNAcylated), in a cell cycle-dependent manner.

It is found in the nucleus. Its subcellular location is the chromosome. It catalyses the reaction ATP + H2O = ADP + phosphate + H(+). Acts as a component of the MCM2-7 complex (MCM complex) which is the replicative helicase essential for 'once per cell cycle' DNA replication initiation and elongation in eukaryotic cells. Core component of CDC45-MCM-GINS (CMG) helicase, the molecular machine that unwinds template DNA during replication, and around which the replisome is built. The active ATPase sites in the MCM2-7 ring are formed through the interaction surfaces of two neighboring subunits such that a critical structure of a conserved arginine finger motif is provided in trans relative to the ATP-binding site of the Walker A box of the adjacent subunit. The six ATPase active sites, however, are likely to contribute differentially to the complex helicase activity. Required for the entry in S phase and for cell division. The sequence is that of DNA replication licensing factor MCM3 (MCM3) from Bos taurus (Bovine).